The following is a 401-amino-acid chain: Short chain dehydrogenase/reductase dpchH (401 aa).

A glycan (N-linked (GlcNAc...) asparagine) is linked at N16. The chain crosses the membrane as a helical span at residues 51–71; sequence VRAVDVLFGTFLYVPLGILFL. Residues 72–80, 99–100, and 118–120 contribute to the NAD(+) site; these read KKSLSGFGD, TG, and AKV. N-linked (GlcNAc...) asparagine glycosylation is present at N242. Y275 (proton acceptor) is an active-site residue. Residues 275–279 and 308–310 each bind NAD(+); these read YGTSK and GTI. An N-linked (GlcNAc...) asparagine glycan is attached at N386.

The protein resides in the membrane. It participates in secondary metabolite biosynthesis; terpenoid biosynthesis. In terms of biological role, short chain dehydrogenase/reductase; part of the gene cluster that mediates the biosynthesis of the diterpenoid pyrones higginsianins A and B. The first step of the pathway is the synthesis of the alpha-pyrone moiety by the polyketide synthase dpchA via condensation of one acetyl-CoA starter unit with 3 malonyl-CoA units and 2 methylations. The alpha-pyrone is then combined with geranylgeranyl pyrophosphate (GGPP) formed by the GGPP synthase dpchD through the action of the prenyltransferase dpchC to yield a linear alpha-pyrone diterpenoid. Subsequent steps in the diterpenoid pyrone biosynthetic pathway involve the decalin core formation, which is initiated by the epoxidation of the C10-C11 olefin by the FAD-dependent oxidoreductase dpchE, and is followed by a cyclization cascade catalyzed by the terpene cyclase dpchB. The short chain dehydrogenase/reductase dpchG then oxidizes the 8S hydroxy group to a ketone and the short chain dehydrogenase/reductase dpchH reduces the ketone to the 8R hydroxy group to yield higginsianin B. Finally, the FAD-dependent oxidoreductase dpchF converts higginsianin B into higginsianin A. The protein is Short chain dehydrogenase/reductase dpchH of Colletotrichum higginsianum (strain IMI 349063) (Crucifer anthracnose fungus).